Here is a 376-residue protein sequence, read N- to C-terminus: Alcohol dehydrogenase 6 (376 aa).

Zn(2+) is bound by residues Cys47, His69, Cys99, Cys102, Cys105, Cys113, and Cys175. NAD(+)-binding positions include 200-205, Asp224, Arg229, 293-295, and Arg371; these read GLGGVG and VGA.

It belongs to the zinc-containing alcohol dehydrogenase family. Class-V subfamily. Dimer. Zn(2+) serves as cofactor.

It is found in the cytoplasm. The enzyme catalyses a primary alcohol + NAD(+) = an aldehyde + NADH + H(+). The catalysed reaction is a secondary alcohol + NAD(+) = a ketone + NADH + H(+). Its function is as follows. Alcohol dehydrogenase. Catalyzes the NAD-dependent oxidation of primary alcohols to the corresponding aldehydes. Oxidizes secondary alcohols to the corresponding ketones. The chain is Alcohol dehydrogenase 6 (Adh6) from Rattus norvegicus (Rat).